The primary structure comprises 553 residues: RNA exonuclease 1 (553 aa).

S24 is subject to Phosphoserine. A coiled-coil region spans residues 167-194 (MEKINKLKELQKKKKITINDLVLSEQQL). Residues 225–373 (IFALDCEMCL…EDARACLELT (149 aa)) form the Exonuclease domain. A coiled-coil region spans residues 509-533 (WNNLSTELEFIQDKKERLDKRRERE).

This sequence belongs to the REXO1/REXO3 family.

It is found in the nucleus. Its function is as follows. 3' exoribonuclease required for 5S rRNA maturation and for the proper maturation of the 5' cistron of the tRNA-Arg3 dicistronic gene. Involved with REX2 in the maturation of the 5.8S rRNA, and with REX2 and REX3, in the 3' processing of the U5L snRNA. In Saccharomyces cerevisiae (strain ATCC 204508 / S288c) (Baker's yeast), this protein is RNA exonuclease 1 (RNH70).